A 179-amino-acid polypeptide reads, in one-letter code: GTP-dependent dephospho-CoA kinase (179 aa).

Residues Asp-49, Val-50, Val-51, Asp-68, Lys-70, and Glu-126 each contribute to the GTP site.

The protein belongs to the GTP-dependent DPCK family.

The catalysed reaction is 3'-dephospho-CoA + GTP = GDP + CoA + H(+). It functions in the pathway cofactor biosynthesis; coenzyme A biosynthesis. Functionally, catalyzes the GTP-dependent phosphorylation of the 3'-hydroxyl group of dephosphocoenzyme A to form coenzyme A (CoA). The polypeptide is GTP-dependent dephospho-CoA kinase (Pyrococcus abyssi (strain GE5 / Orsay)).